A 773-amino-acid polypeptide reads, in one-letter code: Polyribonucleotide nucleotidyltransferase (773 aa).

D532 and D538 together coordinate Mg(2+). In terms of domain architecture, KH spans P598–I657. The 70-residue stretch at G669–V738 folds into the S1 motif domain. The interval A749–S773 is disordered.

Belongs to the polyribonucleotide nucleotidyltransferase family. The cofactor is Mg(2+).

The protein localises to the cytoplasm. The catalysed reaction is RNA(n+1) + phosphate = RNA(n) + a ribonucleoside 5'-diphosphate. Involved in mRNA degradation. Catalyzes the phosphorolysis of single-stranded polyribonucleotides processively in the 3'- to 5'-direction. In Mycobacterium leprae (strain Br4923), this protein is Polyribonucleotide nucleotidyltransferase.